A 244-amino-acid polypeptide reads, in one-letter code: Uridylate kinase (244 aa).

17-20 is a binding site for ATP; it reads KVSG. Residues 25 to 30 are involved in allosteric activation by GTP; that stretch reads GEKGFG. Residue Gly-59 participates in UMP binding. 2 residues coordinate ATP: Gly-60 and Arg-64. UMP contacts are provided by residues Asp-80 and 141-148; that span reads VGNPFFTT. Residues Thr-168, Gln-169, Tyr-174, and Asp-177 each contribute to the ATP site.

This sequence belongs to the UMP kinase family. Homohexamer.

The protein localises to the cytoplasm. It carries out the reaction UMP + ATP = UDP + ADP. It functions in the pathway pyrimidine metabolism; CTP biosynthesis via de novo pathway; UDP from UMP (UMPK route): step 1/1. Its activity is regulated as follows. Allosterically activated by GTP. Inhibited by UTP. In terms of biological role, catalyzes the reversible phosphorylation of UMP to UDP. This is Uridylate kinase from Ehrlichia canis (strain Jake).